Here is a 200-residue protein sequence, read N- to C-terminus: Trem-like transcript 4 protein (200 aa).

Positions 1–25 are cleaved as a signal peptide; that stretch reads MAWGGVHTCCFHLCCCCSWPQGAVP. The region spanning 26-126 is the Ig-like V-type domain; sequence EELHKHPGQT…NIITVLRNIS (101 aa). Cysteine 40 and cysteine 109 form a disulfide bridge. Asparagine 93 carries an N-linked (GlcNAc...) asparagine glycan.

It localises to the secreted. Its function is as follows. Positively regulates Toll-like receptor TLR7 signaling in macrophages. This chain is Trem-like transcript 4 protein (TREML4), found in Homo sapiens (Human).